Consider the following 122-residue polypeptide: Large ribosomal subunit protein uL14 (122 aa).

Belongs to the universal ribosomal protein uL14 family. Part of the 50S ribosomal subunit. Forms a cluster with proteins L3 and L19. In the 70S ribosome, L14 and L19 interact and together make contacts with the 16S rRNA in bridges B5 and B8.

In terms of biological role, binds to 23S rRNA. Forms part of two intersubunit bridges in the 70S ribosome. The protein is Large ribosomal subunit protein uL14 of Borrelia recurrentis (strain A1).